Here is a 184-residue protein sequence, read N- to C-terminus: MGLEEQLPGGILLSTVEKVAGYVRKNSLWPATFGLACCAIEMMATAGPRFDIARFGMERFSATPRQADLMIVAGRVSQKMAPVLRQIYDQMAEPKWVLAMGVCASSGGMFNNYAIVQGVDHVVPVDIYLPGCPPRPEMLLYAILKLHEKIQQMPLGVNRETAIAEAEQAALSARPTIEMRGLLR.

Cys-37, Cys-38, Cys-103, and Cys-132 together coordinate [4Fe-4S] cluster.

The protein belongs to the complex I 20 kDa subunit family. In terms of assembly, NDH-1 is composed of 14 different subunits. Subunits NuoB, C, D, E, F, and G constitute the peripheral sector of the complex. [4Fe-4S] cluster is required as a cofactor.

It localises to the cell membrane. The enzyme catalyses a quinone + NADH + 5 H(+)(in) = a quinol + NAD(+) + 4 H(+)(out). NDH-1 shuttles electrons from NADH, via FMN and iron-sulfur (Fe-S) centers, to quinones in the respiratory chain. The immediate electron acceptor for the enzyme in this species is believed to be a menaquinone. Couples the redox reaction to proton translocation (for every two electrons transferred, four hydrogen ions are translocated across the cytoplasmic membrane), and thus conserves the redox energy in a proton gradient. This Mycolicibacterium paratuberculosis (strain ATCC BAA-968 / K-10) (Mycobacterium paratuberculosis) protein is NADH-quinone oxidoreductase subunit B.